The sequence spans 446 residues: uncharacterized protein (446 aa).

12 helical membrane-spanning segments follow: residues L20–V40, S42–E62, W95–F115, V127–F147, A160–G180, L205–L225, L237–V257, I284–V304, W331–L351, I355–L375, G388–F408, and P414–Q434.

This sequence belongs to the amino acid-polyamine-organocation (APC) superfamily.

Its subcellular location is the cell membrane. This is an uncharacterized protein from Bacillus subtilis (strain 168).